Consider the following 253-residue polypeptide: Discoidin-1 subunit A (253 aa).

Ser-2 is modified (N-acetylserine). Residues 2-152 (STQGLVQLLA…ISLRCEFYTQ (151 aa)) enclose the F5/8 type C domain. A Cell attachment site motif is present at residues 79 to 81 (RGD).

Tetramer of four different chains (A to D). Stalk cells.

It is found in the cytoplasm. Galactose- and N-acetylgalactosamine-binding lectin. May play a role in cell-substratum adhesion rather than in cell-cell adhesion. May be necessary for the maintenance of normal elongate morphology during aggregation. In Dictyostelium discoideum (Social amoeba), this protein is Discoidin-1 subunit A (dscA-1).